Here is a 183-residue protein sequence, read N- to C-terminus: MSQYSGKIIFYEGKCFTGRKLEVFGDCDNFQDKGFMNRVNSIRVETGAWICYDHPDFKGQQYILERGEYPDFHRWNGHNDHMGSCKPVRMHGERYRLELFEGCNFTGQCMEFCEDCPFLQGRGWNKNCVNACKVYGDGAWVLYEEPNYRGRMYIVERGDYRSFNDWQSQSANIQSVRRVVNYF.

4 consecutive Beta/gamma crystallin 'Greek key' domains span residues Gly6–Thr46, Gly47–Arg89, Tyr95–Gly136, and Gly138–Val180.

It belongs to the beta/gamma-crystallin family. Monomer.

In terms of biological role, crystallins are the dominant structural components of the vertebrate eye lens. The polypeptide is Gamma-crystallin N (crygn) (Xenopus tropicalis (Western clawed frog)).